Reading from the N-terminus, the 517-residue chain is Zinc finger protein AEBP2 (517 aa).

A disordered region spans residues 1–229 (MAAAITDMAD…DSEDSISSTI (229 aa)). At A2 the chain carries N-acetylalanine. S18 and S24 each carry phosphoserine. Residues 36–51 (PEEEEEEEEEEEEAEA) are compositionally biased toward acidic residues. Residues 61–78 (GGSGGGGGGGGGGVGGGE) are compositionally biased toward gly residues. Residues 94–121 (GEDEDEEEDDEEEEDESSSSGGGEEESS) are compositionally biased toward acidic residues. The segment covering 122 to 150 (AESLVGSSGGSSSDETRSLSPGAASSSSG) has biased composition (low complexity). S141 carries the phosphoserine modification. Positions 152 to 163 (GDGKEGLEEPKG) are enriched in basic and acidic residues. 2 stretches are compositionally biased toward gly residues: residues 166–175 (GSQGGGGGGS) and 185–196 (GDEGYGTGGGGS). A phosphoserine mark is found at S206, S210, and S211. Residues 209-294 (MSSDGEPLSR…IHVDGQRGGV (86 aa)) are interaction with RBBP4. The segment at 261-286 (YNCCWDQCQACFNSSPDLADHIRSIH) adopts a C2H2-type 1 zinc-finger fold. A C2H2-type 2; degenerate zinc finger spans residues 300–322 (KGCKVYNTPSTSQSWLQRHMLTH). The C2H2-type 3 zinc finger occupies 328–352 (FKCVVGGCNASFASQGGLARHVPTH). Polar residues predominate over residues 352-365 (HFSQQNSSKVSSQP). Residues 352 to 394 (HFSQQNSSKVSSQPKAKEESPSKAGMNKRRKLKNKRRRSLPRP) form a disordered region. Residues 377–392 (MNKRRKLKNKRRRSLP) show a composition bias toward basic residues. At S390 the chain carries Phosphoserine. Positions 407-478 (RHRAICFNLS…QLKTKVVHLS (72 aa)) are interaction with SUZ12. An important for nucleosome binding activity of the PRC2 complex region spans residues 495 to 517 (TMPQKRLKRTLIRKVFNLYLSKQ).

The protein belongs to the AEBP2/jing C2H2-type zinc-finger family. As to quaternary structure, self-associates. Associates with the PRC2 complex, which consists of the core components EED, EZH1 or EZH2, SUZ12, and RBBP4, and various combinations of accessory subunits including AEBP2, JARID2, PHF19, MTF2 and EPOP. Found in a monomeric PRC2.2 (class 2) complex consisting of at least SUZ12, RBBP4, AEBP2 and JARID2. Within the PRC2 complex, interacts directly with SUZ12; competes with PHF19 for SUZ12 binding. Interacts with EED, EZH2, and RBBP4. May also interact with RBBP7.

The protein localises to the nucleus. Acts as an accessory subunit for the core Polycomb repressive complex 2 (PRC2), which mediates histone H3K27 (H3K27me3) trimethylation on chromatin leading to transcriptional repression of the affected target gene. Plays a role in nucleosome localization of the PRC2 complex. In Homo sapiens (Human), this protein is Zinc finger protein AEBP2 (AEBP2).